The sequence spans 448 residues: Probable glycine dehydrogenase (decarboxylating) subunit 1 (448 aa).

Belongs to the GcvP family. N-terminal subunit subfamily. In terms of assembly, the glycine cleavage system is composed of four proteins: P, T, L and H. In this organism, the P 'protein' is a heterodimer of two subunits.

The catalysed reaction is N(6)-[(R)-lipoyl]-L-lysyl-[glycine-cleavage complex H protein] + glycine + H(+) = N(6)-[(R)-S(8)-aminomethyldihydrolipoyl]-L-lysyl-[glycine-cleavage complex H protein] + CO2. In terms of biological role, the glycine cleavage system catalyzes the degradation of glycine. The P protein binds the alpha-amino group of glycine through its pyridoxal phosphate cofactor; CO(2) is released and the remaining methylamine moiety is then transferred to the lipoamide cofactor of the H protein. This is Probable glycine dehydrogenase (decarboxylating) subunit 1 from Bacillus pumilus (strain SAFR-032).